We begin with the raw amino-acid sequence, 144 residues long: Large ribosomal subunit protein uL16 (144 aa).

The segment covering 1 to 16 (MLIPKRVKYRKQHRPR) has biased composition (basic residues). Residues 1–25 (MLIPKRVKYRKQHRPRGNGGVSKGG) form a disordered region.

Belongs to the universal ribosomal protein uL16 family. As to quaternary structure, part of the 50S ribosomal subunit.

Binds 23S rRNA and is also seen to make contacts with the A and possibly P site tRNAs. This chain is Large ribosomal subunit protein uL16, found in Desulforamulus reducens (strain ATCC BAA-1160 / DSM 100696 / MI-1) (Desulfotomaculum reducens).